The sequence spans 967 residues: Isoleucine--tRNA ligase 2 (967 aa).

Positions 58-68 match the 'HIGH' region motif; it reads PYANGDIHIGH. The disordered stretch occupies residues 430–463; sequence EADPGRADVTEEAGATGEARKVGKAEEAEEAGPV. Glu598 provides a ligand contact to L-isoleucyl-5'-AMP. Positions 639 to 643 match the 'KMSKS' region motif; that stretch reads KMSKS. Lys642 serves as a coordination point for ATP. Cys922, Cys925, Cys942, and Cys945 together coordinate Zn(2+).

This sequence belongs to the class-I aminoacyl-tRNA synthetase family. IleS type 1 subfamily. As to quaternary structure, monomer. Zn(2+) serves as cofactor.

The protein resides in the cytoplasm. The catalysed reaction is tRNA(Ile) + L-isoleucine + ATP = L-isoleucyl-tRNA(Ile) + AMP + diphosphate. Functionally, catalyzes the attachment of isoleucine to tRNA(Ile). As IleRS can inadvertently accommodate and process structurally similar amino acids such as valine, to avoid such errors it has two additional distinct tRNA(Ile)-dependent editing activities. One activity is designated as 'pretransfer' editing and involves the hydrolysis of activated Val-AMP. The other activity is designated 'posttransfer' editing and involves deacylation of mischarged Val-tRNA(Ile). This Burkholderia pseudomallei (strain K96243) protein is Isoleucine--tRNA ligase 2.